Reading from the N-terminus, the 466-residue chain is Putative chitinase 2 (466 aa).

The signal sequence occupies residues 1–17; that stretch reads MYLTIWLVPLLAVGTWG. In terms of domain architecture, GH18 spans 20–380; it reads FNRFCHYNSW…MAVIHGLNAY (361 aa). Cysteines 24 and 49 form a disulfide. Glutamate 141 acts as the Proton donor in catalysis. A coiled-coil region spans residues 395–447; sequence YNKKILRARVSLRNYRRRNQQGKVAEMEQRIRNLEQELQQSMGNMAYERQQAQ.

The protein belongs to the glycosyl hydrolase 18 family. Prismatic layer of shell (at protein level). Expressed primarily in the mantle with highest level in the mantle edge and lower level in the mantle pallium.

The protein resides in the secreted. The enzyme catalyses Random endo-hydrolysis of N-acetyl-beta-D-glucosaminide (1-&gt;4)-beta-linkages in chitin and chitodextrins.. This Margaritifera margaritifera (Freshwater pearl mussel) protein is Putative chitinase 2.